The chain runs to 888 residues: Phosphoenolpyruvate carboxylase (888 aa).

Residues His144 and Lys553 contribute to the active site.

This sequence belongs to the PEPCase type 1 family. Mg(2+) serves as cofactor.

It catalyses the reaction oxaloacetate + phosphate = phosphoenolpyruvate + hydrogencarbonate. Forms oxaloacetate, a four-carbon dicarboxylic acid source for the tricarboxylic acid cycle. This Alcanivorax borkumensis (strain ATCC 700651 / DSM 11573 / NCIMB 13689 / SK2) protein is Phosphoenolpyruvate carboxylase.